We begin with the raw amino-acid sequence, 333 residues long: Chlorophyllide reductase 35.5 kDa chain (333 aa).

Residues 1-22 (MTDAPNLKGFDARLREEAAEEP) form a disordered region. Residues 45 to 50 (GSGKSF) and lysine 74 contribute to the ATP site. Serine 49 is a Mg(2+) binding site. Positions 130 and 165 each coordinate [4Fe-4S] cluster. 219-220 (NK) lines the ATP pocket.

The protein belongs to the NifH/BchL/ChlL family. Homodimer. Chlorophyllide reductase is composed of three subunits; BchX, BchY and BchZ. Requires [4Fe-4S] cluster as cofactor.

The enzyme catalyses 3-deacetyl-3-vinylbacteriochlorophyllide a + 2 oxidized [2Fe-2S]-[ferredoxin] + ADP + phosphate = chlorophyllide a + 2 reduced [2Fe-2S]-[ferredoxin] + ATP + H2O + H(+). It catalyses the reaction bacteriochlorophyllide a + 2 oxidized [2Fe-2S]-[ferredoxin] + ADP + phosphate = 3-acetyl-3-devinylchlorophyllide a + 2 reduced [2Fe-2S]-[ferredoxin] + ATP + H2O + H(+). The catalysed reaction is 3-deacetyl-3-(1-hydroxyethyl)bacteriochlorophyllide a + 2 oxidized [2Fe-2S]-[ferredoxin] + ADP + phosphate = 3-devinyl-3-(1-hydroxyethyl)chlorophyllide a + 2 reduced [2Fe-2S]-[ferredoxin] + ATP + H2O + H(+). It participates in porphyrin-containing compound metabolism; bacteriochlorophyll biosynthesis. In terms of biological role, converts chlorophylls (Chl) into bacteriochlorophylls (BChl) by reducing ring B of the tetrapyrrole. In Rhodobacter capsulatus (strain ATCC BAA-309 / NBRC 16581 / SB1003), this protein is Chlorophyllide reductase 35.5 kDa chain (bchX).